Here is a 615-residue protein sequence, read N- to C-terminus: tRNA uridine 5-carboxymethylaminomethyl modification enzyme MnmG (615 aa).

FAD is bound at residue Gly-11 to Gly-16. Residue Gly-278–Phe-292 participates in NAD(+) binding.

Belongs to the MnmG family. Homodimer. Heterotetramer of two MnmE and two MnmG subunits. It depends on FAD as a cofactor.

It is found in the cytoplasm. In terms of biological role, NAD-binding protein involved in the addition of a carboxymethylaminomethyl (cmnm) group at the wobble position (U34) of certain tRNAs, forming tRNA-cmnm(5)s(2)U34. This Myxococcus xanthus (strain DK1622) protein is tRNA uridine 5-carboxymethylaminomethyl modification enzyme MnmG.